An 82-amino-acid chain; its full sequence is Large ribosomal subunit protein bL31B (82 aa).

This sequence belongs to the bacterial ribosomal protein bL31 family. Type B subfamily. As to quaternary structure, part of the 50S ribosomal subunit.

This Acinetobacter baylyi (strain ATCC 33305 / BD413 / ADP1) protein is Large ribosomal subunit protein bL31B.